Here is an 81-residue protein sequence, read N- to C-terminus: Sulfur carrier protein TusA (81 aa).

C19 acts as the Cysteine persulfide intermediate in catalysis.

This sequence belongs to the sulfur carrier protein TusA family. As to quaternary structure, interacts with IscS.

The protein resides in the cytoplasm. The protein operates within tRNA modification. Functionally, sulfur carrier protein involved in sulfur trafficking in the cell. Part of a sulfur-relay system required for 2-thiolation during synthesis of 2-thiouridine of the modified wobble base 5-methylaminomethyl-2-thiouridine (mnm(5)s(2)U) in tRNA. Interacts with IscS and stimulates its cysteine desulfurase activity. Accepts an activated sulfur from IscS, which is then transferred to TusD, and thus determines the direction of sulfur flow from IscS to 2-thiouridine formation. Also appears to be involved in sulfur transfer for the biosynthesis of molybdopterin. This chain is Sulfur carrier protein TusA, found in Pectobacterium atrosepticum (strain SCRI 1043 / ATCC BAA-672) (Erwinia carotovora subsp. atroseptica).